The following is a 113-amino-acid chain: Hydrogenase maturation factor HypA (113 aa).

A Ni(2+)-binding site is contributed by H2. C70, C73, C86, and C88 together coordinate Zn(2+).

The protein belongs to the HypA/HybF family.

Its function is as follows. Involved in the maturation of [NiFe] hydrogenases. Required for nickel insertion into the metal center of the hydrogenase. The polypeptide is Hydrogenase maturation factor HypA (Nostoc punctiforme (strain ATCC 29133 / PCC 73102)).